The following is a 270-amino-acid chain: Sec-independent protein translocase protein TatC (270 aa).

Helical transmembrane passes span Phe-25–Ile-45, Val-75–Phe-95, Val-111–Phe-131, Leu-156–Leu-176, Lys-195–Pro-211, and Val-213–Gly-233. The segment at Ser-243–Asn-270 is disordered.

This sequence belongs to the TatC family. The Tat system comprises two distinct complexes: a TatABC complex, containing multiple copies of TatA, TatB and TatC subunits, and a separate TatA complex, containing only TatA subunits. Substrates initially bind to the TatABC complex, which probably triggers association of the separate TatA complex to form the active translocon.

It is found in the cell inner membrane. Part of the twin-arginine translocation (Tat) system that transports large folded proteins containing a characteristic twin-arginine motif in their signal peptide across membranes. Together with TatB, TatC is part of a receptor directly interacting with Tat signal peptides. In Desulforapulum autotrophicum (strain ATCC 43914 / DSM 3382 / VKM B-1955 / HRM2) (Desulfobacterium autotrophicum), this protein is Sec-independent protein translocase protein TatC.